The sequence spans 729 residues: Heterogeneous nuclear ribonucleoprotein M (729 aa).

The segment covering Met-1–Ala-13 has biased composition (low complexity). Positions Met-1–Asn-65 are disordered. N-acetylalanine is present on Ala-2. Lys-17 is covalently cross-linked (Glycyl lysine isopeptide (Lys-Gly) (interchain with G-Cter in SUMO2)). A Phosphoserine modification is found at Ser-29. Residues Lys-37, Lys-68, and Lys-82 each participate in a glycyl lysine isopeptide (Lys-Gly) (interchain with G-Cter in SUMO2) cross-link. The segment covering Lys-37–Lys-49 has biased composition (basic and acidic residues). RRM domains lie at Tyr-70 to Asp-148 and Ser-203 to Arg-280. Ser-85 is modified (phosphoserine). Residues Lys-87 and Lys-126 each participate in a glycyl lysine isopeptide (Lys-Gly) (interchain with G-Cter in SUMO2) cross-link. N6-acetyllysine; alternate is present on Lys-133. A Glycyl lysine isopeptide (Lys-Gly) (interchain with G-Cter in SUMO2); alternate cross-link involves residue Lys-133. Glycyl lysine isopeptide (Lys-Gly) (interchain with G-Cter in SUMO2) cross-links involve residues Lys-142 and Lys-144. Phosphoserine is present on Ser-203. Lys-220 is covalently cross-linked (Glycyl lysine isopeptide (Lys-Gly) (interchain with G-Cter in SUMO2)). Residue Lys-276 is modified to N6-acetyllysine; alternate. Lys-276 is covalently cross-linked (Glycyl lysine isopeptide (Lys-Gly) (interchain with G-Cter in SUMO2); alternate). Glycyl lysine isopeptide (Lys-Gly) (interchain with G-Cter in SUMO2) cross-links involve residues Lys-284 and Lys-344. Residues Ser-364 and Ser-376 each carry the phosphoserine modification. Glycyl lysine isopeptide (Lys-Gly) (interchain with G-Cter in SUMO2) cross-links involve residues Lys-380 and Lys-387. Ser-396 is subject to Phosphoserine. 4 repeat units span residues Gly-399–Gly-404, Gly-406–Ser-411, Gly-414–Gly-419, and Gly-425–Gly-430. The 27 X 6 AA repeats of [GEVSTPAN]-[ILMV]-[DE]-[RH]-[MLVI]-[GAV] stretch occupies residues Gly-399–Gly-607. Ser-431 is subject to Phosphoserine. 3 consecutive repeat copies span residues Glu-432–Gly-437, Val-439–Gly-444, and Ser-445–Gly-450. Ser-451 is modified (phosphoserine). 4 consecutive repeat copies span residues Ser-452 to Gly-457, Gly-460 to Ala-465, Ser-467 to Gly-472, and Thr-474 to Gly-479. Ser-467 is modified (phosphoserine). Ser-480 is subject to Phosphoserine. Tandem repeats lie at residues Gly-481 to Gly-486, Gly-492 to Ala-497, Pro-499 to Gly-504, Thr-506 to Gly-511, Gly-513 to Gly-518, Ala-520 to Gly-525, Ser-527 to Val-532, Ser-539 to Gly-544, Val-546 to Ala-551, Gly-553 to Gly-558, Asn-561 to Gly-566, Leu-567 to Gly-571, Ser-574 to Gly-579, Leu-580 to Gly-584, Ser-587 to Gly-592, and Gly-602 to Gly-607. Position 495 is an omega-N-methylarginine (Arg-495). Residue Ser-527 is modified to Phosphoserine. A Phosphoserine modification is found at Ser-574. Phosphoserine is present on Ser-587. 3 positions are modified to phosphoserine: Ser-617, Ser-632, and Ser-636. Residue Lys-650 forms a Glycyl lysine isopeptide (Lys-Gly) (interchain with G-Cter in SUMO2) linkage. The RRM 3 domain maps to Cys-652 to Asn-728. The residue at position 664 (Thr-664) is a Phosphothreonine. Lys-666 is covalently cross-linked (Glycyl lysine isopeptide (Lys-Gly) (interchain with G-Cter in SUMO2)). The residue at position 671 (Lys-671) is an N6-acetyllysine. Residues Lys-684 and Lys-691 each participate in a glycyl lysine isopeptide (Lys-Gly) (interchain with G-Cter in SUMO2) cross-link. Position 697 is an N6-acetyllysine; alternate (Lys-697). Lys-697 participates in a covalent cross-link: Glycyl lysine isopeptide (Lys-Gly) (interchain with G-Cter in SUMO2); alternate. Lys-697 is covalently cross-linked (Glycyl lysine isopeptide (Lys-Gly) (interchain with G-Cter in SUMO1); alternate). Ser-700 carries the phosphoserine modification. Lys-715 participates in a covalent cross-link: Glycyl lysine isopeptide (Lys-Gly) (interchain with G-Cter in SUMO2).

Identified in the spliceosome C complex. Interacts with PPIA/CYPA. Post-translationally, sumoylated.

Its subcellular location is the nucleus. Functionally, pre-mRNA binding protein in vivo, binds avidly to poly(G) and poly(U) RNA homopolymers in vitro. Involved in splicing. Acts as a receptor for carcinoembryonic antigen in Kupffer cells, may initiate a series of signaling events leading to tyrosine phosphorylation of proteins and induction of IL-1 alpha, IL-6, IL-10 and tumor necrosis factor alpha cytokines. In Mus musculus (Mouse), this protein is Heterogeneous nuclear ribonucleoprotein M (Hnrnpm).